Here is a 505-residue protein sequence, read N- to C-terminus: Forkhead box protein O4 (505 aa).

The segment covering 1-10 (MDPGNENSAT) has biased composition (polar residues). 2 disordered regions span residues 1 to 100 (MDPG…RRNA) and 176 to 246 (SWWM…CSRN). Thr-32 carries the phosphothreonine; by PKB/AKT1 modification. Residues 54–64 (LGEKVHTEGRS) are compositionally biased toward basic and acidic residues. Residues 100–188 (AWGNQSYAEL…MLNPEGGKSG (89 aa)) constitute a DNA-binding region (fork-head). A Phosphoserine; by PKB/AKT1 modification is found at Ser-197. Positions 205–216 (LRGRSKAPKKKP) are enriched in basic residues. Ser-262 carries the phosphoserine; by PKB/AKT1 modification.

As to quaternary structure, interacts with CREBBP/CBP, CTNNB1, MYOCD, SIRT1, SRF and YWHAZ. Acetylated by CREBBP/CBP and deacetylated by SIRT1. Binding of YWHAZ inhibits DNA-binding. Interacts with USP7; the interaction is enhanced in presence of hydrogen peroxide and occurs independently of TP53. Interacts with NLK, and this inhibits monoubiquitination and transcriptional activity. Interacts with FOXK1; the interaction inhibits MEF2C transactivation activity. In terms of processing, acetylation by CREBBP/CBP, which is induced by peroxidase stress, inhibits transcriptional activity. Deacetylation by SIRT1 is NAD-dependent and stimulates transcriptional activity. Phosphorylation by PKB/AKT1 inhibits transcriptional activity and is responsible for cytoplasmic localization. May be phosphorylated at multiple sites by NLK. Post-translationally, monoubiquitinated; monoubiquitination is induced by oxidative stress and reduced by deacetylase inhibitors; results in its relocalization to the nucleus and its increased transcriptional activity. Deubiquitinated by USP7; deubiquitination is induced by oxidative stress; enhances its interaction with USP7 and consequently, deubiquitination; increases its translocation to the cytoplasm and inhibits its transcriptional activity. Hydrogene-peroxide-induced ubiquitination and USP7-mediated deubiquitination have no major effect on its protein stability. In terms of tissue distribution, heart, brain, placenta, lung, liver, skeletal muscle, kidney and pancreas. Isoform zeta is most abundant in the liver, kidney, and pancreas.

It localises to the cytoplasm. The protein resides in the nucleus. Functionally, transcription factor involved in the regulation of the insulin signaling pathway. Binds to insulin-response elements (IREs) and can activate transcription of IGFBP1. Down-regulates expression of HIF1A and suppresses hypoxia-induced transcriptional activation of HIF1A-modulated genes. Also involved in negative regulation of the cell cycle. Involved in increased proteasome activity in embryonic stem cells (ESCs) by activating expression of PSMD11 in ESCs, leading to enhanced assembly of the 26S proteasome, followed by higher proteasome activity. This Homo sapiens (Human) protein is Forkhead box protein O4 (FOXO4).